We begin with the raw amino-acid sequence, 128 residues long: UPF0212 protein TGAM_1344 (128 aa).

The protein belongs to the UPF0212 family.

This Thermococcus gammatolerans (strain DSM 15229 / JCM 11827 / EJ3) protein is UPF0212 protein TGAM_1344.